The primary structure comprises 67 residues: UPF0337 protein CC_0938 (67 aa).

The segment at 37–67 is disordered; it reads AAQKAKGDLQNKVGKAQDKARRRDQALNARL. The span at 41–61 shows a compositional bias: basic and acidic residues; the sequence is AKGDLQNKVGKAQDKARRRDQ.

It belongs to the UPF0337 (CsbD) family.

The protein is UPF0337 protein CC_0938 of Caulobacter vibrioides (strain ATCC 19089 / CIP 103742 / CB 15) (Caulobacter crescentus).